A 398-amino-acid polypeptide reads, in one-letter code: DNA replication and repair protein RecF (398 aa).

30-37 (GSNGLGKT) lines the ATP pocket.

The protein belongs to the RecF family.

Its subcellular location is the cytoplasm. In terms of biological role, the RecF protein is involved in DNA metabolism; it is required for DNA replication and normal SOS inducibility. RecF binds preferentially to single-stranded, linear DNA. It also seems to bind ATP. The protein is DNA replication and repair protein RecF of Renibacterium salmoninarum (strain ATCC 33209 / DSM 20767 / JCM 11484 / NBRC 15589 / NCIMB 2235).